We begin with the raw amino-acid sequence, 117 residues long: Hydrogenase maturation factor HypA (117 aa).

His-2 is a Ni(2+) binding site. 4 residues coordinate Zn(2+): Cys-73, Cys-76, Cys-89, and Cys-92.

This sequence belongs to the HypA/HybF family.

Involved in the maturation of [NiFe] hydrogenases. Required for nickel insertion into the metal center of the hydrogenase. This chain is Hydrogenase maturation factor HypA, found in Pelodictyon phaeoclathratiforme (strain DSM 5477 / BU-1).